The following is a 319-amino-acid chain: Cytochrome c biogenesis protein CcsA (319 aa).

A run of 8 helical transmembrane segments spans residues Val-11–Phe-31, Ile-34–Leu-54, Leu-71–Ser-91, Leu-97–Leu-117, Ile-142–Ile-162, Ile-227–Asn-247, Trp-254–Leu-274, and Ala-288–Leu-308.

It belongs to the CcmF/CycK/Ccl1/NrfE/CcsA family. May interact with Ccs1.

The protein resides in the plastid. Its subcellular location is the chloroplast thylakoid membrane. In terms of biological role, required during biogenesis of c-type cytochromes (cytochrome c6 and cytochrome f) at the step of heme attachment. This chain is Cytochrome c biogenesis protein CcsA, found in Porphyra purpurea (Red seaweed).